The sequence spans 416 residues: ABSCISIC ACID-INSENSITIVE 5-like protein 5 (416 aa).

The segment at 1 to 23 is disordered; sequence MDGSMNLGNEPPGDGGGGGGLTR. Positions 13 to 22 are enriched in gly residues; it reads GDGGGGGGLT. Phosphoserine occurs at positions 26, 45, and 86. Phosphothreonine is present on T135. The interval 300 to 326 is disordered; it reads SEGIGKSNGDSSSLSPSPYMFNGGVRG. The bZIP domain occupies 336-399; sequence VERRQRRMIK…KNQETEMRNL (64 aa). The basic motif stretch occupies residues 338–357; the sequence is RRQRRMIKNRESAARSRARK. Residues 364 to 385 form a leucine-zipper region; sequence LEAEVAKLKEENDELQRKQARI. Residues 388 to 416 are disordered; it reads MQKNQETEMRNLLQGGPKKKLRRTESGPW.

It belongs to the bZIP family. ABI5 subfamily. As to quaternary structure, DNA-binding heterodimer. Interacts with ARIA. The activation by phosphorylation is induced by abscisic acid (ABA). Phosphorylated by SRK2C, SRK2D, SRK2E, SRK2F and SRK2I in vitro. In terms of tissue distribution, expressed in roots, leaves, flowers and siliques but not in seeds.

It localises to the nucleus. Functionally, involved in ABA and stress responses and acts as a positive component of glucose signal transduction. Functions as a transcriptional activator in the ABA-inducible expression of rd29B. Binds specifically to the ABA-responsive element (ABRE) of the rd29B gene promoter. The polypeptide is ABSCISIC ACID-INSENSITIVE 5-like protein 5 (ABF2) (Arabidopsis thaliana (Mouse-ear cress)).